The chain runs to 574 residues: Eukaryotic translation initiation factor 3 subunit D (574 aa).

The segment at 153–178 (QRRGGNARQGQRGQGGRFGGDRPKER) is disordered. Over residues 154–163 (RRGGNARQGQ) the composition is skewed to low complexity. Positions 312–326 (PVETLTVSETSAEPP) are RNA gate. Residues 555 to 574 (EGTFDSERESSEEENSDDDQ) form a disordered region. Over residues 564 to 574 (SSEEENSDDDQ) the composition is skewed to acidic residues.

This sequence belongs to the eIF-3 subunit D family. Component of the eukaryotic translation initiation factor 3 (eIF-3) complex.

Its subcellular location is the cytoplasm. MRNA cap-binding component of the eukaryotic translation initiation factor 3 (eIF-3) complex, which is involved in protein synthesis of a specialized repertoire of mRNAs and, together with other initiation factors, stimulates binding of mRNA and methionyl-tRNAi to the 40S ribosome. The eIF-3 complex specifically targets and initiates translation of a subset of mRNAs involved in cell proliferation. In the eIF-3 complex, eif3d specifically recognizes and binds the 7-methylguanosine cap of a subset of mRNAs. The protein is Eukaryotic translation initiation factor 3 subunit D of Caenorhabditis briggsae.